Here is a 185-residue protein sequence, read N- to C-terminus: Ribosome-recycling factor (185 aa).

The protein belongs to the RRF family.

The protein resides in the cytoplasm. In terms of biological role, responsible for the release of ribosomes from messenger RNA at the termination of protein biosynthesis. May increase the efficiency of translation by recycling ribosomes from one round of translation to another. The sequence is that of Ribosome-recycling factor from Shewanella baltica (strain OS223).